Reading from the N-terminus, the 1381-residue chain is Hepatocyte growth factor receptor (1381 aa).

An N-terminal signal peptide occupies residues methionine 1–glycine 24. At glutamate 25–threonine 932 the chain is on the extracellular side. Positions lysine 27–leucine 515 constitute a Sema domain. Asparagine 45 carries an N-linked (GlcNAc...) asparagine glycan. Cystine bridges form between cysteine 95-cysteine 101, cysteine 98-cysteine 160, cysteine 133-cysteine 141, and cysteine 173-cysteine 176. Residue asparagine 106 is glycosylated (N-linked (GlcNAc...) asparagine). Residues asparagine 203 and asparagine 359 are each glycosylated (N-linked (GlcNAc...) asparagine). 2 cysteine pairs are disulfide-bonded: cysteine 299–cysteine 364 and cysteine 386–cysteine 398. Asparagine 400 and asparagine 406 each carry an N-linked (GlcNAc...) asparagine glycan. Cystine bridges form between cysteine 520/cysteine 538, cysteine 526/cysteine 561, cysteine 529/cysteine 545, and cysteine 541/cysteine 551. IPT/TIG domains lie at proline 563–valine 655, proline 657–arginine 739, and proline 742–valine 836. The O-linked (Man) threonine glycan is linked to threonine 582. N-linked (GlcNAc...) asparagine glycans are attached at residues asparagine 607 and asparagine 635. O-linked (Man) threonine glycosylation is found at threonine 676 and threonine 761. Asparagine 785, asparagine 879, and asparagine 930 each carry an N-linked (GlcNAc...) asparagine glycan. A helical membrane pass occupies residues glycine 933–leucine 955. The Cytoplasmic portion of the chain corresponds to lysine 956–threonine 1381. Serine 966 carries the phosphoserine modification. Threonine 977 bears the Phosphothreonine mark. Serine 990 and serine 997 each carry phosphoserine. Tyrosine 1003 bears the Phosphotyrosine mark. Residues valine 1078–isoleucine 1345 form the Protein kinase domain. Residues isoleucine 1084–valine 1092 and lysine 1110 each bind ATP. The Proton acceptor role is filled by aspartate 1204. Residues leucine 1212 to threonine 1381 form an interaction with RANBP9 region. Phosphotyrosine is present on tyrosine 1230. Tyrosine 1234 and tyrosine 1235 each carry phosphotyrosine; by autocatalysis. Threonine 1289 is subject to Phosphothreonine. The segment at tryptophan 1320–valine 1359 is interaction with MUC20. Tyrosine 1349 and tyrosine 1356 each carry phosphotyrosine; by autocatalysis. Position 1365 is a phosphotyrosine (tyrosine 1365).

It belongs to the protein kinase superfamily. Tyr protein kinase family. Heterodimer made of an alpha chain (50 kDa) and a beta chain (145 kDa) which are disulfide linked. Binds PLXNB1. Interacts when phosphorylated with downstream effectors including STAT3, PIK3R1, SRC, PCLG1, GRB2 and GAB1. Interacts with SPSB1, SPSB2 and SPSB4. Interacts with INPP5D/SHIP1. When phosphorylated at Tyr-1356, interacts with INPPL1/SHIP2. Interacts with RANBP9 and RANBP10, as well as SPSB1, SPSB2, SPSB3 and SPSB4. SPSB1 binding occurs in the presence and in the absence of HGF, however HGF treatment has a positive effect on this interaction. Interacts with MUC20; prevents interaction with GRB2 and suppresses hepatocyte growth factor-induced cell proliferation. Interacts with GRB10. Interacts with PTPN1 and PTPN2. Interacts with HSP90AA1 and HSP90AB1; the interaction suppresses MET kinase activity. Interacts with tensin TNS3. Interacts (when phosphorylated) with tensin TNS4 (via SH2 domain); the interaction increases MET protein stability by inhibiting MET endocytosis and subsequent lysosomal degradation. Post-translationally, autophosphorylated in response to ligand binding on Tyr-1234 and Tyr-1235 in the kinase domain leading to further phosphorylation of Tyr-1349 and Tyr-1356 in the C-terminal multifunctional docking site. Dephosphorylated by PTPRJ at Tyr-1349 and Tyr-1365. Dephosphorylated by PTPN1 and PTPN2. Ubiquitinated. Ubiquitination by CBL regulates the receptor stability and activity through proteasomal degradation. In terms of processing, O-mannosylation of IPT/TIG domains by TMEM260 is required for protein maturation. O-mannosylated residues are composed of single mannose glycans that are not elongated or modified.

Its subcellular location is the membrane. The enzyme catalyses L-tyrosyl-[protein] + ATP = O-phospho-L-tyrosyl-[protein] + ADP + H(+). Its activity is regulated as follows. In its inactive state, the C-terminal tail interacts with the catalytic domain and inhibits the kinase activity. Upon ligand binding, the C-terminal tail is displaced and becomes phosphorylated, thus increasing the kinase activity. Receptor tyrosine kinase that transduces signals from the extracellular matrix into the cytoplasm by binding to hepatocyte growth factor/HGF ligand. Regulates many physiological processes including proliferation, scattering, morphogenesis and survival. Ligand binding at the cell surface induces autophosphorylation of MET on its intracellular domain that provides docking sites for downstream signaling molecules. Following activation by ligand, interacts with the PI3-kinase subunit PIK3R1, PLCG1, SRC, GRB2, STAT3 or the adapter GAB1. Recruitment of these downstream effectors by MET leads to the activation of several signaling cascades including the RAS-ERK, PI3 kinase-AKT, or PLCgamma-PKC. The RAS-ERK activation is associated with the morphogenetic effects while PI3K/AKT coordinates prosurvival effects. During embryonic development, MET signaling plays a role in gastrulation, development and migration of muscles and neuronal precursors, angiogenesis and kidney formation. In adults, participates in wound healing as well as organ regeneration and tissue remodeling. Also promotes differentiation and proliferation of hematopoietic cells. This chain is Hepatocyte growth factor receptor (MET), found in Sus scrofa (Pig).